The sequence spans 79 residues: D-alanyl carrier protein (79 aa).

Residues 1-76 enclose the Carrier domain; it reads MKEQIFDIIE…KIAARVQEKK (76 aa). Position 34 is an O-(pantetheine 4'-phosphoryl)serine (S34).

It belongs to the DltC family. Post-translationally, 4'-phosphopantetheine is transferred from CoA to a specific serine of apo-DCP.

It is found in the cytoplasm. Its pathway is cell wall biogenesis; lipoteichoic acid biosynthesis. Carrier protein involved in the D-alanylation of lipoteichoic acid (LTA). The loading of thioester-linked D-alanine onto DltC is catalyzed by D-alanine--D-alanyl carrier protein ligase DltA. The DltC-carried D-alanyl group is further transferred to cell membrane phosphatidylglycerol (PG) by forming an ester bond, probably catalyzed by DltD. D-alanylation of LTA plays an important role in modulating the properties of the cell wall in Gram-positive bacteria, influencing the net charge of the cell wall. The polypeptide is D-alanyl carrier protein (Lactococcus lactis subsp. lactis (strain IL1403) (Streptococcus lactis)).